Reading from the N-terminus, the 612-residue chain is T-cell immunomodulatory protein (612 aa).

An N-terminal signal peptide occupies residues 1–33 (MAAAGRLPSSWALFSPLLAGLALLGVGPVPARA). N-linked (GlcNAc...) asparagine glycosylation is found at N36, N95, N139, N146, N151, N176, N188, N226, and N243. One copy of the FG-GAP; atypical repeat lies at 258-293 (VVGQSAFADFDGDGHMDHLLPGCEDKNCQKSTIYLV). N-linked (GlcNAc...) asparagine glycosylation is found at N353, N371, and N482. A helical membrane pass occupies residues 567–587 (VLLTAIALIGVCVFILAIIGI).

The protein belongs to the TIP family. In terms of assembly, interacts with RUVBL1, RUVBL2 and alpha-tubulin. In terms of tissue distribution, ubiquitously expressed.

The protein localises to the secreted. The protein resides in the membrane. Its function is as follows. Modulator of T-cell function. Has a protective effect in graft versus host disease model. This Homo sapiens (Human) protein is T-cell immunomodulatory protein.